The primary structure comprises 171 residues: MPLTWKDSGLRWYWVAVLVFFADQLSKQWVLANFDLHESLNLLPFFNFTYVRNYGAAFSFLSDAGGWQRWLFTIVAVGFSTLLTVWLRKQSASLLKLNLAYTLVIGGALGNLVDRLMHGFVVDFIDFFWAKSHYPAFNIADSAICIGAVLIIWDAFLSGKSETDSAEGVKK.

Transmembrane regions (helical) follow at residues 12 to 32 (WYWVAVLVFFADQLSKQWVLA), 67 to 87 (WQRWLFTIVAVGFSTLLTVWL), and 93 to 113 (SLLKLNLAYTLVIGGALGNLV). Catalysis depends on residues D123 and D141. A helical transmembrane segment spans residues 137–157 (FNIADSAICIGAVLIIWDAFL).

The protein belongs to the peptidase A8 family.

The protein localises to the cell inner membrane. It catalyses the reaction Release of signal peptides from bacterial membrane prolipoproteins. Hydrolyzes -Xaa-Yaa-Zaa-|-(S,diacylglyceryl)Cys-, in which Xaa is hydrophobic (preferably Leu), and Yaa (Ala or Ser) and Zaa (Gly or Ala) have small, neutral side chains.. The protein operates within protein modification; lipoprotein biosynthesis (signal peptide cleavage). This protein specifically catalyzes the removal of signal peptides from prolipoproteins. The polypeptide is Lipoprotein signal peptidase (Shewanella baltica (strain OS195)).